We begin with the raw amino-acid sequence, 706 residues long: K(+)-insensitive pyrophosphate-energized proton pump (706 aa).

A run of 5 helical transmembrane segments spans residues 1 to 21, 62 to 82, 83 to 103, 128 to 148, and 164 to 184; these read MTAL…AIWA, IVIF…GFAI, GAIL…RANV, GMLV…FLVY, and VALG…GGIF. Residue K186 participates in substrate binding. Mg(2+)-binding residues include D189, D193, N216, and D219. A run of 6 helical transmembrane segments spans residues 231–251, 261–281, 298–318, 328–348, 376–398, and 412–432; these read LFET…IFFA, TLPL…TFFV, IATG…LIGF, GMSL…IIWI, IQGL…AGIL, and ATAT…FGPV. D434 serves as a coordination point for Mg(2+). Helical transmembrane passes span 465-485, 516-536, 585-605, and 616-636; these read AVTK…LFAA, YVVV…AMGM, IIPS…IYAI, and AFSA…FVAI. Positions 646, 672, and 676 each coordinate Ca(2+). Residue K679 coordinates substrate. The chain crosses the membrane as a helical span at residues 685 to 705; the sequence is AVNPMIKITNIVALLLLAILA.

Belongs to the H(+)-translocating pyrophosphatase (TC 3.A.10) family. K(+)-insensitive subfamily. As to quaternary structure, homodimer. The cofactor is Mg(2+).

The protein localises to the cell inner membrane. It carries out the reaction diphosphate + H2O + H(+)(in) = 2 phosphate + 2 H(+)(out). Functionally, proton pump that utilizes the energy of pyrophosphate hydrolysis as the driving force for proton movement across the membrane. Generates a proton motive force. The sequence is that of K(+)-insensitive pyrophosphate-energized proton pump from Bradyrhizobium diazoefficiens (strain JCM 10833 / BCRC 13528 / IAM 13628 / NBRC 14792 / USDA 110).